A 124-amino-acid polypeptide reads, in one-letter code: Ribonuclease pancreatic (124 aa).

Residues lysine 7 and arginine 10 each contribute to the substrate site. Catalysis depends on histidine 12, which acts as the Proton acceptor. 4 cysteine pairs are disulfide-bonded: cysteine 26–cysteine 84, cysteine 40–cysteine 95, cysteine 58–cysteine 110, and cysteine 65–cysteine 72. Asparagine 34 carries an N-linked (GlcNAc...) asparagine; partial glycan. Substrate is bound by residues lysine 41–threonine 45, lysine 66, and arginine 85. Residue histidine 119 is the Proton donor of the active site.

The protein belongs to the pancreatic ribonuclease family. In terms of assembly, monomer. Interacts with and forms tight 1:1 complexes with RNH1. Dimerization of two such complexes may occur. Interaction with RNH1 inhibits this protein. In terms of tissue distribution, pancreas.

The protein resides in the secreted. The catalysed reaction is an [RNA] containing cytidine + H2O = an [RNA]-3'-cytidine-3'-phosphate + a 5'-hydroxy-ribonucleotide-3'-[RNA].. The enzyme catalyses an [RNA] containing uridine + H2O = an [RNA]-3'-uridine-3'-phosphate + a 5'-hydroxy-ribonucleotide-3'-[RNA].. Functionally, endonuclease that catalyzes the cleavage of RNA on the 3' side of pyrimidine nucleotides. Acts on single-stranded and double-stranded RNA. This Damaliscus korrigum (Topi) protein is Ribonuclease pancreatic (RNASE1).